We begin with the raw amino-acid sequence, 177 residues long: Large ribosomal subunit protein uL6 (177 aa).

The protein belongs to the universal ribosomal protein uL6 family. As to quaternary structure, part of the 50S ribosomal subunit.

Functionally, this protein binds to the 23S rRNA, and is important in its secondary structure. It is located near the subunit interface in the base of the L7/L12 stalk, and near the tRNA binding site of the peptidyltransferase center. The sequence is that of Large ribosomal subunit protein uL6 from Ralstonia pickettii (strain 12J).